Reading from the N-terminus, the 70-residue chain is Conotoxin Im23.4 (70 aa).

Positions 1 to 22 (MIMRMTLTLFVLVVMTAASASG) are cleaved as a signal peptide. A propeptide spanning residues 23 to 30 (DALTEAKR) is cleaved from the precursor. 3 disulfides stabilise this stretch: cysteine 34–cysteine 41, cysteine 45–cysteine 53, and cysteine 54–cysteine 69.

It belongs to the conotoxin K superfamily. Expressed by the venom duct.

The protein localises to the secreted. Its function is as follows. Probable neurotoxin. This chain is Conotoxin Im23.4, found in Conus imperialis (Imperial cone).